The sequence spans 250 residues: MSFIAIIPARYASTRLPGKPLADIAGKPMVVHVMERALESGASQVIVATDHPEVVTAVEAAGGEVCLTRADHQSGTERLAEVIERYGFADDQIIVNVQGDEPLVPPEIIRQVAENLAASSAGMATLAVPIESSEEAFNPNAVKVVMDAQGYALYFSRAAIPWERERFAQSKETIGDCFLRHIGIYAYRAGFVRRYVNWAPSQLEQIELLEQLRVLWYGEKIHVAVAKAVPAVGVDTQEDLDRVRAIMLNK.

The protein belongs to the KdsB family.

Its subcellular location is the cytoplasm. It catalyses the reaction 3-deoxy-alpha-D-manno-oct-2-ulosonate + CTP = CMP-3-deoxy-beta-D-manno-octulosonate + diphosphate. It functions in the pathway nucleotide-sugar biosynthesis; CMP-3-deoxy-D-manno-octulosonate biosynthesis; CMP-3-deoxy-D-manno-octulosonate from 3-deoxy-D-manno-octulosonate and CTP: step 1/1. It participates in bacterial outer membrane biogenesis; lipopolysaccharide biosynthesis. Functionally, activates KDO (a required 8-carbon sugar) for incorporation into bacterial lipopolysaccharide in Gram-negative bacteria. The sequence is that of 3-deoxy-manno-octulosonate cytidylyltransferase from Yersinia enterocolitica serotype O:8 / biotype 1B (strain NCTC 13174 / 8081).